Reading from the N-terminus, the 419-residue chain is 3-isopropylmalate dehydratase large subunit (419 aa).

Cysteine 301, cysteine 361, and cysteine 364 together coordinate [4Fe-4S] cluster.

The protein belongs to the aconitase/IPM isomerase family. LeuC type 2 subfamily. In terms of assembly, heterodimer of LeuC and LeuD. Requires [4Fe-4S] cluster as cofactor.

It catalyses the reaction (2R,3S)-3-isopropylmalate = (2S)-2-isopropylmalate. The protein operates within amino-acid biosynthesis; L-leucine biosynthesis; L-leucine from 3-methyl-2-oxobutanoate: step 2/4. Catalyzes the isomerization between 2-isopropylmalate and 3-isopropylmalate, via the formation of 2-isopropylmaleate. The chain is 3-isopropylmalate dehydratase large subunit from Campylobacter hominis (strain ATCC BAA-381 / DSM 21671 / CCUG 45161 / LMG 19568 / NCTC 13146 / CH001A).